The sequence spans 181 residues: Large ribosomal subunit protein uL6 (181 aa).

It belongs to the universal ribosomal protein uL6 family. Part of the 50S ribosomal subunit.

In terms of biological role, this protein binds to the 23S rRNA, and is important in its secondary structure. It is located near the subunit interface in the base of the L7/L12 stalk, and near the tRNA binding site of the peptidyltransferase center. The chain is Large ribosomal subunit protein uL6 from Rhodopirellula baltica (strain DSM 10527 / NCIMB 13988 / SH1).